The following is a 252-amino-acid chain: MLNQIIDRKREDILKIKLSEDLKLPKRSFKKALLSPNRFVALIAEVKKASPSKGVIQEGFEPVKIAKQYEQAKADCLSVLTDTPFFQGKNSYLSDVKRSVSLPVLRKDFIIDSIQVEEADRIGADAILLIGEALEPQKLFELYQQAVEKGMDVLVEVHGEETLEGILNVFTPEIIGVNNRNLKNFETTVGQTERMAKLVPPGTVLISESGIGKSEDLTFVKTCGAQAVLVGESLMRETSQLKAVYALFGEDG.

It belongs to the TrpC family.

It catalyses the reaction 1-(2-carboxyphenylamino)-1-deoxy-D-ribulose 5-phosphate + H(+) = (1S,2R)-1-C-(indol-3-yl)glycerol 3-phosphate + CO2 + H2O. Its pathway is amino-acid biosynthesis; L-tryptophan biosynthesis; L-tryptophan from chorismate: step 4/5. In Bacillus licheniformis (strain ATCC 14580 / DSM 13 / JCM 2505 / CCUG 7422 / NBRC 12200 / NCIMB 9375 / NCTC 10341 / NRRL NRS-1264 / Gibson 46), this protein is Indole-3-glycerol phosphate synthase.